The chain runs to 330 residues: GMP reductase (330 aa).

Residue Cys-180 is the Thioimidate intermediate of the active site. 209 to 232 serves as a coordination point for NADP(+); the sequence is LIADGGIRHNGDIAKSVRFGASMV.

It belongs to the IMPDH/GMPR family. GuaC type 2 subfamily.

It carries out the reaction IMP + NH4(+) + NADP(+) = GMP + NADPH + 2 H(+). Its function is as follows. Catalyzes the irreversible NADPH-dependent deamination of GMP to IMP. It functions in the conversion of nucleobase, nucleoside and nucleotide derivatives of G to A nucleotides, and in maintaining the intracellular balance of A and G nucleotides. This chain is GMP reductase, found in Lactobacillus delbrueckii subsp. bulgaricus (strain ATCC BAA-365 / Lb-18).